The primary structure comprises 325 residues: Elongation factor P--(R)-beta-lysine ligase (325 aa).

Residue 76 to 78 (SPE) coordinates substrate. ATP is bound by residues 100-102 (RNE) and Asn-109. Tyr-118 contributes to the substrate binding site. 244-245 (EL) provides a ligand contact to ATP. Glu-251 is a binding site for substrate. Residue Gly-300 participates in ATP binding.

This sequence belongs to the class-II aminoacyl-tRNA synthetase family. EpmA subfamily. Homodimer.

The enzyme catalyses D-beta-lysine + L-lysyl-[protein] + ATP = N(6)-((3R)-3,6-diaminohexanoyl)-L-lysyl-[protein] + AMP + diphosphate + H(+). Functionally, with EpmB is involved in the beta-lysylation step of the post-translational modification of translation elongation factor P (EF-P) on 'Lys-34'. Catalyzes the ATP-dependent activation of (R)-beta-lysine produced by EpmB, forming a lysyl-adenylate, from which the beta-lysyl moiety is then transferred to the epsilon-amino group of EF-P 'Lys-34'. This chain is Elongation factor P--(R)-beta-lysine ligase, found in Salmonella choleraesuis (strain SC-B67).